Here is a 306-residue protein sequence, read N- to C-terminus: Aspartate carbamoyltransferase catalytic subunit (306 aa).

Carbamoyl phosphate contacts are provided by R51 and T52. L-aspartate is bound at residue K79. Carbamoyl phosphate contacts are provided by R101, H129, and Q132. 2 residues coordinate L-aspartate: R162 and R213. Residues A254 and P255 each coordinate carbamoyl phosphate.

Belongs to the aspartate/ornithine carbamoyltransferase superfamily. ATCase family. In terms of assembly, heterododecamer (2C3:3R2) of six catalytic PyrB chains organized as two trimers (C3), and six regulatory PyrI chains organized as three dimers (R2).

It carries out the reaction carbamoyl phosphate + L-aspartate = N-carbamoyl-L-aspartate + phosphate + H(+). It functions in the pathway pyrimidine metabolism; UMP biosynthesis via de novo pathway; (S)-dihydroorotate from bicarbonate: step 2/3. Its function is as follows. Catalyzes the condensation of carbamoyl phosphate and aspartate to form carbamoyl aspartate and inorganic phosphate, the committed step in the de novo pyrimidine nucleotide biosynthesis pathway. This Bacillus thuringiensis (strain Al Hakam) protein is Aspartate carbamoyltransferase catalytic subunit.